A 221-amino-acid polypeptide reads, in one-letter code: Large ribosomal subunit protein bL25 (221 aa).

Residues Ser174 to Glu221 form a disordered region. Residues Glu184–Glu221 show a composition bias toward acidic residues.

Belongs to the bacterial ribosomal protein bL25 family. CTC subfamily. Part of the 50S ribosomal subunit; part of the 5S rRNA/L5/L18/L25 subcomplex. Contacts the 5S rRNA. Binds to the 5S rRNA independently of L5 and L18.

In terms of biological role, this is one of the proteins that binds to the 5S RNA in the ribosome where it forms part of the central protuberance. The chain is Large ribosomal subunit protein bL25 from Staphylococcus haemolyticus (strain JCSC1435).